Reading from the N-terminus, the 267-residue chain is Energy-coupling factor transporter transmembrane protein EcfT (267 aa).

5 consecutive transmembrane segments (helical) span residues 26-46, 73-93, 116-136, 151-171, and 247-267; these read IILTFIMMIFIFLINTYWGYL, ILFIVVFAGIINIFMIKGTVI, LFLLIITASLLTYTTTPIALT, VPVHEIAMMMTIALRFIPTLL, and LVTGITVVFMTWVILMEYVFF.

It belongs to the energy-coupling factor EcfT family. As to quaternary structure, forms a stable energy-coupling factor (ECF) transporter complex composed of 2 membrane-embedded substrate-binding proteins (S component), 2 ATP-binding proteins (A component) and 2 transmembrane proteins (T component). May be able to interact with more than 1 S component at a time.

The protein resides in the cell membrane. In terms of biological role, transmembrane (T) component of an energy-coupling factor (ECF) ABC-transporter complex. Unlike classic ABC transporters this ECF transporter provides the energy necessary to transport a number of different substrates. The sequence is that of Energy-coupling factor transporter transmembrane protein EcfT from Ruminiclostridium cellulolyticum (strain ATCC 35319 / DSM 5812 / JCM 6584 / H10) (Clostridium cellulolyticum).